A 1297-amino-acid polypeptide reads, in one-letter code: Phosphoribosylformylglycinamidine synthase (1297 aa).

ATP is bound by residues 307 to 318 (GASTGSGGEIRD) and Ala678. Mg(2+) contacts are provided by Glu718, Asn722, and Asp886. A Glutamine amidotransferase type-1 domain is found at 1044–1297 (MAILREQGVN…MFQNARKNLG (254 aa)). Residue Cys1137 is the Nucleophile of the active site. Catalysis depends on residues His1262 and Glu1264.

This sequence in the N-terminal section; belongs to the FGAMS family. Monomer.

It localises to the cytoplasm. It catalyses the reaction N(2)-formyl-N(1)-(5-phospho-beta-D-ribosyl)glycinamide + L-glutamine + ATP + H2O = 2-formamido-N(1)-(5-O-phospho-beta-D-ribosyl)acetamidine + L-glutamate + ADP + phosphate + H(+). It participates in purine metabolism; IMP biosynthesis via de novo pathway; 5-amino-1-(5-phospho-D-ribosyl)imidazole from N(2)-formyl-N(1)-(5-phospho-D-ribosyl)glycinamide: step 1/2. Its function is as follows. Phosphoribosylformylglycinamidine synthase involved in the purines biosynthetic pathway. Catalyzes the ATP-dependent conversion of formylglycinamide ribonucleotide (FGAR) and glutamine to yield formylglycinamidine ribonucleotide (FGAM) and glutamate. This Vibrio vulnificus (strain CMCP6) protein is Phosphoribosylformylglycinamidine synthase.